The following is a 194-amino-acid chain: Peptidyl-tRNA hydrolase (194 aa).

Tyr-17 serves as a coordination point for tRNA. His-22 serves as the catalytic Proton acceptor. Residues Tyr-68, Asn-70, and Asn-116 each coordinate tRNA.

Belongs to the PTH family. In terms of assembly, monomer.

It is found in the cytoplasm. It carries out the reaction an N-acyl-L-alpha-aminoacyl-tRNA + H2O = an N-acyl-L-amino acid + a tRNA + H(+). Hydrolyzes ribosome-free peptidyl-tRNAs (with 1 or more amino acids incorporated), which drop off the ribosome during protein synthesis, or as a result of ribosome stalling. In terms of biological role, catalyzes the release of premature peptidyl moieties from peptidyl-tRNA molecules trapped in stalled 50S ribosomal subunits, and thus maintains levels of free tRNAs and 50S ribosomes. This is Peptidyl-tRNA hydrolase from Marinomonas sp. (strain MWYL1).